Consider the following 912-residue polypeptide: Metabotropic glutamate receptor 4 (912 aa).

The first 32 residues, 1–32 (MSGKGGWAWWWARLPLCLLLSLYGSWVPSSLG), serve as a signal peptide directing secretion. Residues 33-586 (KPKGHPHMNS…PIVKLEWDSP (554 aa)) lie on the Extracellular side of the membrane. A disulfide bridge connects residues Cys-67 and Cys-109. Asn-98 carries an N-linked (GlcNAc...) asparagine glycan. L-glutamate is bound by residues Ser-159, 180-182 (AST), and Tyr-230. 7 disulfides stabilise this stretch: Cys-249–Cys-538, Cys-372–Cys-388, Cys-428–Cys-435, Cys-520–Cys-539, Cys-524–Cys-542, Cys-545–Cys-557, and Cys-560–Cys-573. An N-linked (GlcNAc...) asparagine glycan is attached at Asn-301. Asp-312 lines the L-glutamate pocket. Position 405 (Lys-405) interacts with L-glutamate. The chain crosses the membrane as a helical span at residues 587–607 (WAVLPLFLAVVGIAATLFVVV). The Cytoplasmic segment spans residues 608–624 (TFVRYNDTPIVKASGRE). The helical transmembrane segment at 625-645 (LSYVLLAGIFLCYATTFLMIA) threads the bilayer. The Extracellular segment spans residues 646 to 653 (EPDLGTCS). The chain crosses the membrane as a helical span at residues 654–671 (LRRIFLGLGMSISYAALL). Residues 672-699 (TKTNRIYRIFEQGKRSVSAPRFISPASQ) lie on the Cytoplasmic side of the membrane. Residues 700–720 (LAITFVLISLQLLCICVWFVV) traverse the membrane as a helical segment. Over 721 to 751 (DPSHSVVDFQDQRTLDPRFARGVLKCDISDL) the chain is Extracellular. Residues 752–772 (SLICLLGYSMLLMVTCTVYAI) traverse the membrane as a helical segment. Topologically, residues 773-786 (KTRGVPETFNEAKP) are cytoplasmic. A helical transmembrane segment spans residues 787 to 807 (IGFTMYTTCIVWLAFIPIFFG). The Extracellular segment spans residues 808 to 826 (TSQSADKLYIQTTTLTVSV). Residues 827-847 (SLSASVSLGMLYMPKVYIILF) traverse the membrane as a helical segment. Topologically, residues 848 to 912 (HPEQNVPKRK…TYVTYTNHAI (65 aa)) are cytoplasmic.

The protein belongs to the G-protein coupled receptor 3 family. Interacts with PICK1.

The protein resides in the cell membrane. G-protein coupled receptor for glutamate. Ligand binding causes a conformation change that triggers signaling via guanine nucleotide-binding proteins (G proteins) and modulates the activity of down-stream effectors. Signaling inhibits adenylate cyclase activity. The sequence is that of Metabotropic glutamate receptor 4 (Grm4) from Mus musculus (Mouse).